The primary structure comprises 867 residues: Replication origin-binding protein (867 aa).

The interval 1-39 is disordered; the sequence is MNVATCTHQTHHAARAPGATSAPGAASGDPLGARRPIGD. A compositionally biased stretch (low complexity) spans 15–28; that stretch reads RAPGATSAPGAASG. Positions 86–251 constitute a Helicase ATP-binding domain; that stretch reads ASAPTARCVT…CSLRGEKNVH (166 aa). 99–106 contacts ATP; that stretch reads APMGSGKT.

Belongs to the herpesviridae OriBP family. As to quaternary structure, homodimer. Interacts with the major DNA-binding protein ICP8. Interacts with the helicase/primase component UL8 and the polymerase accessory protein UL42.

It localises to the host nucleus. Functionally, functions as a docking protein to recruit essential components of the viral replication machinery to viral DNA origins. In the presence of the major DNA-binding protein, opens dsDNA leading to a conformational change in the origin that facilitates DNA unwinding and subsequent replication. The chain is Replication origin-binding protein from Human herpesvirus 2 (strain HG52) (HHV-2).